We begin with the raw amino-acid sequence, 189 residues long: Peptidyl-tRNA hydrolase (189 aa).

A tRNA-binding site is contributed by Tyr-15. Catalysis depends on His-20, which acts as the Proton acceptor. TRNA-binding residues include Phe-66, Asn-68, and Asn-114.

Belongs to the PTH family. Monomer.

The protein resides in the cytoplasm. It carries out the reaction an N-acyl-L-alpha-aminoacyl-tRNA + H2O = an N-acyl-L-amino acid + a tRNA + H(+). Functionally, hydrolyzes ribosome-free peptidyl-tRNAs (with 1 or more amino acids incorporated), which drop off the ribosome during protein synthesis, or as a result of ribosome stalling. Its function is as follows. Catalyzes the release of premature peptidyl moieties from peptidyl-tRNA molecules trapped in stalled 50S ribosomal subunits, and thus maintains levels of free tRNAs and 50S ribosomes. The polypeptide is Peptidyl-tRNA hydrolase (Streptococcus sanguinis (strain SK36)).